The primary structure comprises 319 residues: Phospho-N-acetylmuramoyl-pentapeptide-transferase (319 aa).

10 helical membrane-spanning segments follow: residues 1-21 (MSIL…FLLM), 53-73 (TMGG…VGAW), 77-97 (LNGT…IGMW), 117-137 (FLAQ…EGFQ), 140-160 (FGLT…MVGF), 172-192 (GLVT…ALVQ), 195-215 (TEVA…FPFN), 221-241 (IFMG…VALV), 249-269 (LIIG…VAYF), and 298-318 (GVFW…ILFL).

It belongs to the glycosyltransferase 4 family. MraY subfamily. It depends on Mg(2+) as a cofactor.

It localises to the cell membrane. It carries out the reaction UDP-N-acetyl-alpha-D-muramoyl-L-alanyl-gamma-D-glutamyl-L-lysyl-D-alanyl-D-alanine + di-trans,octa-cis-undecaprenyl phosphate = Mur2Ac(oyl-L-Ala-gamma-D-Glu-L-Lys-D-Ala-D-Ala)-di-trans,octa-cis-undecaprenyl diphosphate + UMP. Its pathway is cell wall biogenesis; peptidoglycan biosynthesis. In terms of biological role, catalyzes the initial step of the lipid cycle reactions in the biosynthesis of the cell wall peptidoglycan: transfers peptidoglycan precursor phospho-MurNAc-pentapeptide from UDP-MurNAc-pentapeptide onto the lipid carrier undecaprenyl phosphate, yielding undecaprenyl-pyrophosphoryl-MurNAc-pentapeptide, known as lipid I. This Limosilactobacillus fermentum (strain NBRC 3956 / LMG 18251) (Lactobacillus fermentum) protein is Phospho-N-acetylmuramoyl-pentapeptide-transferase.